The following is a 470-amino-acid chain: Ribosomal protein uS12 methylthiotransferase RimO (470 aa).

The disordered stretch occupies residues 1–27; the sequence is MPCQAPHSDSNVKNPSEATNQKDHSPR. Over residues 7-19 the composition is skewed to polar residues; sequence HSDSNVKNPSEAT. One can recognise an MTTase N-terminal domain in the interval 26-141; the sequence is PRVGFVSLGC…VMQAVHTHLP (116 aa). Cysteine 35, cysteine 71, cysteine 100, cysteine 172, cysteine 176, and cysteine 179 together coordinate [4Fe-4S] cluster. The Radical SAM core domain occupies 158–399; the sequence is LTPKHYAYLK…MEVAEAVSAR (242 aa). The region spanning 402-470 is the TRAM domain; it reads QRKVGQTLRV…ADGHDLWGEV (69 aa).

The protein belongs to the methylthiotransferase family. RimO subfamily. The cofactor is [4Fe-4S] cluster.

It localises to the cytoplasm. It catalyses the reaction L-aspartate(89)-[ribosomal protein uS12]-hydrogen + (sulfur carrier)-SH + AH2 + 2 S-adenosyl-L-methionine = 3-methylsulfanyl-L-aspartate(89)-[ribosomal protein uS12]-hydrogen + (sulfur carrier)-H + 5'-deoxyadenosine + L-methionine + A + S-adenosyl-L-homocysteine + 2 H(+). In terms of biological role, catalyzes the methylthiolation of an aspartic acid residue of ribosomal protein uS12. The sequence is that of Ribosomal protein uS12 methylthiotransferase RimO from Cupriavidus taiwanensis (strain DSM 17343 / BCRC 17206 / CCUG 44338 / CIP 107171 / LMG 19424 / R1) (Ralstonia taiwanensis (strain LMG 19424)).